Reading from the N-terminus, the 396-residue chain is MTHISNNRPRIAVIGGGIAGLTVAASLLRAGIECTVYEQATVFADAGAGIQIAPNSARILHRLGLAGALERRATRAHAIETRRWQDGAPLARTELGEPCVERYGAPYYLIQRADLHRSLLELLPPGVVRHSAACTAVEERPDGVTLRFADGTSEEAGVVVGADGIHSALRNHLVGDRPRFSGHTVHRGLVAADRLPSLFEVPKVLFWLGPNGHVTSYPIAQHGLVHFSAVITSPEWDPEVWSAPSRPGEAAAAFAGWNAEVAELIGAAEQAHHWALFDRDCVGGWSTGRMTLAGDAAHPMVPYLSQGANQAIEDAWVLADLLGAADLDPGPALRRYEELRLPRVREVHRRSRERGHEFHLPDGPQQRLRDRSMPTAERLDDYAWIYGFEAAPVGSR.

FAD-binding positions include Ala19, 38 to 39, and Arg112; that span reads EQ. Catalysis depends on Tyr217, which acts as the Proton acceptor. Asp295 is an FAD binding site. Residues 352–371 are disordered; that stretch reads RERGHEFHLPDGPQQRLRDR.

The protein belongs to the 6-hydroxynicotinate 3-monooxygenase family. It depends on FAD as a cofactor.

The enzyme catalyses 3-amino-4-hydroxybenzoate + NADPH + O2 + H(+) = 3-amino-2,4-dihydroxybenzoate + NADP(+) + H2O. It participates in antibiotic biosynthesis. Its function is as follows. Part of a gene cluster involved in the biosynthesis of thioplatensimycin (thioPTM) and platensimycin (PTM), potent and selective inhibitors of bacterial and mammalian fatty acid synthases. Catalyzes the hydroxylation of 3-amino-4-hydroxybenzoate (3,4-AHBA) to 3-amino-2,4-dihydroxybenzoate (3,2,4-ADHBA). The polypeptide is 3-amino-4-hydroxybenzoate 2-monooxygenase PtmB3 (Streptomyces platensis).